We begin with the raw amino-acid sequence, 693 residues long: Golgin subfamily A member 6C (693 aa).

Disordered stretches follow at residues 20–71 (NKLA…DSQY), 497–547 (LPGE…GTEQ), and 629–693 (NPAD…MQDT). Residues 73–611 (ELAVALESSS…KLLELQELVL (539 aa)) adopt a coiled-coil conformation. Residues 537 to 547 (LPKEKADGTEQ) are compositionally biased toward basic and acidic residues. The segment covering 679–693 (PVQQIVQLSPVMQDT) has biased composition (polar residues).

The protein belongs to the GOLGA6 family.

This Homo sapiens (Human) protein is Golgin subfamily A member 6C (GOLGA6C).